A 388-amino-acid chain; its full sequence is Putative membrane protein MJ1562 (388 aa).

6 helical membrane passes run 22-42, 219-239, 246-266, 273-293, 320-340, and 351-371; these read FLML…ATNV, SQSF…IIYF, IMPL…MGLL, ATAG…IHLM, AVMA…LAPL, and ALGI…LIVI.

Belongs to the resistance-nodulation-cell division (RND) (TC 2.A.6) family. MmpL subfamily.

Its subcellular location is the cell membrane. The chain is Putative membrane protein MJ1562 from Methanocaldococcus jannaschii (strain ATCC 43067 / DSM 2661 / JAL-1 / JCM 10045 / NBRC 100440) (Methanococcus jannaschii).